We begin with the raw amino-acid sequence, 59 residues long: Potassium channel toxin alpha-KTx 15.4 (59 aa).

The signal sequence occupies residues 1-22 (MKFSSIILLTLLICSMSIFGNC). Gln23 carries the pyrrolidone carboxylic acid modification. 3 cysteine pairs are disulfide-bonded: Cys30–Cys50, Cys35–Cys55, and Cys39–Cys57.

Expressed by the venom gland.

Its subcellular location is the secreted. Its function is as follows. Blocker of A-type voltage-gated potassium channels of cerebellar granular cells. May also inhibit Kv4/KCND when coexpressed with DPP6 or DPP10. The occlusion of the outer entry of the K(+) conducting pore is partially reversible and affects both open and closed channels. It shares the same target in rat brain than BmTX3 (AC Q8I0L5) and AmmTX3 (AC P60208). The chain is Potassium channel toxin alpha-KTx 15.4 from Androctonus australis (Sahara scorpion).